A 185-amino-acid polypeptide reads, in one-letter code: Neuronal vesicle trafficking-associated protein 1 (185 aa).

Residues 1 to 82 (MVKLGNNFSE…ITEGVSERFK (82 aa)) lie on the Cytoplasmic side of the membrane. Residues 83–103 (VTVLVLFALAFLTCVVFLVVY) form a helical; Signal-anchor for type II membrane protein membrane-spanning segment. The Lumenal portion of the chain corresponds to 104–185 (KVYKYDHTCP…QETEAAEKSA (82 aa)).

Belongs to the NSG family.

Its subcellular location is the membrane. The protein resides in the golgi apparatus. It localises to the trans-Golgi network membrane. The protein localises to the endosome membrane. It is found in the cell projection. Its subcellular location is the dendrite. The protein resides in the early endosome membrane. It localises to the late endosome membrane. The protein localises to the lysosome lumen. It is found in the recycling endosome membrane. Its subcellular location is the cytoplasmic vesicle membrane. The protein resides in the golgi stack membrane. It localises to the endosome. The protein localises to the multivesicular body membrane. Its function is as follows. Plays a role in the recycling mechanism in neurons of multiple receptors and acts at the level of early endosomes to promote sorting of receptors toward a recycling pathway. This is Neuronal vesicle trafficking-associated protein 1 from Gallus gallus (Chicken).